A 329-amino-acid polypeptide reads, in one-letter code: Malate dehydrogenase (329 aa).

13-19 is an NAD(+) binding site; sequence GAAGNIS. Substrate is bound by residues Arg-94 and Arg-100. NAD(+)-binding positions include Asn-107, Gln-114, and 131 to 133; that span reads VGN. Positions 133 and 164 each coordinate substrate. The Proton acceptor role is filled by His-189.

This sequence belongs to the LDH/MDH superfamily. MDH type 2 family.

It catalyses the reaction (S)-malate + NAD(+) = oxaloacetate + NADH + H(+). Its function is as follows. Catalyzes the reversible oxidation of malate to oxaloacetate. The polypeptide is Malate dehydrogenase (Psychrobacter cryohalolentis (strain ATCC BAA-1226 / DSM 17306 / VKM B-2378 / K5)).